A 444-amino-acid chain; its full sequence is Phosphoglucosamine mutase (444 aa).

The Phosphoserine intermediate role is filled by S102. S102, D241, D243, and D245 together coordinate Mg(2+). Phosphoserine is present on S102.

It belongs to the phosphohexose mutase family. The cofactor is Mg(2+). In terms of processing, activated by phosphorylation.

The enzyme catalyses alpha-D-glucosamine 1-phosphate = D-glucosamine 6-phosphate. Its function is as follows. Catalyzes the conversion of glucosamine-6-phosphate to glucosamine-1-phosphate. This Leptothrix cholodnii (strain ATCC 51168 / LMG 8142 / SP-6) (Leptothrix discophora (strain SP-6)) protein is Phosphoglucosamine mutase.